We begin with the raw amino-acid sequence, 227 residues long: Phosphoribosylformylglycinamidine synthase subunit PurQ (227 aa).

Residues 3–225 (FAVIVFPGSN…LKQWRETYVV (223 aa)) enclose the Glutamine amidotransferase type-1 domain. Cys86 acts as the Nucleophile in catalysis. Active-site residues include His194 and Glu196.

In terms of assembly, part of the FGAM synthase complex composed of 1 PurL, 1 PurQ and 2 PurS subunits.

The protein resides in the cytoplasm. It catalyses the reaction N(2)-formyl-N(1)-(5-phospho-beta-D-ribosyl)glycinamide + L-glutamine + ATP + H2O = 2-formamido-N(1)-(5-O-phospho-beta-D-ribosyl)acetamidine + L-glutamate + ADP + phosphate + H(+). The enzyme catalyses L-glutamine + H2O = L-glutamate + NH4(+). Its pathway is purine metabolism; IMP biosynthesis via de novo pathway; 5-amino-1-(5-phospho-D-ribosyl)imidazole from N(2)-formyl-N(1)-(5-phospho-D-ribosyl)glycinamide: step 1/2. In terms of biological role, part of the phosphoribosylformylglycinamidine synthase complex involved in the purines biosynthetic pathway. Catalyzes the ATP-dependent conversion of formylglycinamide ribonucleotide (FGAR) and glutamine to yield formylglycinamidine ribonucleotide (FGAM) and glutamate. The FGAM synthase complex is composed of three subunits. PurQ produces an ammonia molecule by converting glutamine to glutamate. PurL transfers the ammonia molecule to FGAR to form FGAM in an ATP-dependent manner. PurS interacts with PurQ and PurL and is thought to assist in the transfer of the ammonia molecule from PurQ to PurL. This chain is Phosphoribosylformylglycinamidine synthase subunit PurQ, found in Bacillus thuringiensis (strain Al Hakam).